The primary structure comprises 488 residues: MKYSDLRDFIAQLESRELLKRIDYPVSPHLEMTVVSDKVLRSGGPALLFTNTPNYNMPVLTNLFGTVERVALGMGEESIVALREIGKLLAALKEPDPPKGFKDAFSKLPLLKQALNMAPKYVSGAECQTHVWEKDEVDLTLLPIQTCWPGDVAPLITWGLVTTRGPHQSRENMGIYRQQLLSKNKLIMRWLSHRGGALDYQAWQQEYPQERFPVAVTLGADPATILAAVTPVPDTLSEYAFAGLLRGQRTRLTRCIGNDLHVPASAEIVLEGYLEPGNEAPEGPYGDHTGYYNEVQSFPVFTVERITHRDKPIYHSTYTGRPPDEPAILGVALNEVFIPLLQKQFPEIVDFYLPPEGCSYRLAVVTIKKQYPGHAKRIMMAVWSFLRQFMYTKFVIVCDDDVDARNWQDVIWAMTTRMDPSRDTVMVENTPIDYLDFASPVSGLGSKMGMDATSKWPGETQREWGKPITMDEDVLNRVNSYWSLLGLK.

Asn-172 lines the Mn(2+) pocket. Prenylated FMN-binding positions include 175–177, 189–191, and 194–195; these read IYR, RWL, and RG. Mn(2+) is bound at residue Glu-238. Asp-287 (proton donor) is an active-site residue.

The protein belongs to the UbiD family. Homohexamer. The cofactor is prenylated FMN. It depends on Mn(2+) as a cofactor.

The protein resides in the cell membrane. The enzyme catalyses a 4-hydroxy-3-(all-trans-polyprenyl)benzoate + H(+) = a 2-(all-trans-polyprenyl)phenol + CO2. The protein operates within cofactor biosynthesis; ubiquinone biosynthesis. Catalyzes the decarboxylation of 3-octaprenyl-4-hydroxy benzoate to 2-octaprenylphenol, an intermediate step in ubiquinone biosynthesis. In Legionella pneumophila (strain Paris), this protein is 3-octaprenyl-4-hydroxybenzoate carboxy-lyase.